We begin with the raw amino-acid sequence, 299 residues long: ATP phosphoribosyltransferase (299 aa).

The protein belongs to the ATP phosphoribosyltransferase family. Long subfamily. It depends on Mg(2+) as a cofactor.

The protein resides in the cytoplasm. It carries out the reaction 1-(5-phospho-beta-D-ribosyl)-ATP + diphosphate = 5-phospho-alpha-D-ribose 1-diphosphate + ATP. It participates in amino-acid biosynthesis; L-histidine biosynthesis; L-histidine from 5-phospho-alpha-D-ribose 1-diphosphate: step 1/9. Feedback inhibited by histidine. Functionally, catalyzes the condensation of ATP and 5-phosphoribose 1-diphosphate to form N'-(5'-phosphoribosyl)-ATP (PR-ATP). Has a crucial role in the pathway because the rate of histidine biosynthesis seems to be controlled primarily by regulation of HisG enzymatic activity. This Shewanella sp. (strain ANA-3) protein is ATP phosphoribosyltransferase.